We begin with the raw amino-acid sequence, 245 residues long: DNA repair protein RecO (245 aa).

This sequence belongs to the RecO family.

Functionally, involved in DNA repair and RecF pathway recombination. This Klebsiella pneumoniae (strain 342) protein is DNA repair protein RecO.